Here is a 297-residue protein sequence, read N- to C-terminus: Bifunctional protein FolD (297 aa).

Residues 168–170, threonine 195, and valine 236 each bind NADP(+); that span reads GRG.

Belongs to the tetrahydrofolate dehydrogenase/cyclohydrolase family. Homodimer.

It carries out the reaction (6R)-5,10-methylene-5,6,7,8-tetrahydrofolate + NADP(+) = (6R)-5,10-methenyltetrahydrofolate + NADPH. The catalysed reaction is (6R)-5,10-methenyltetrahydrofolate + H2O = (6R)-10-formyltetrahydrofolate + H(+). It functions in the pathway one-carbon metabolism; tetrahydrofolate interconversion. In terms of biological role, catalyzes the oxidation of 5,10-methylenetetrahydrofolate to 5,10-methenyltetrahydrofolate and then the hydrolysis of 5,10-methenyltetrahydrofolate to 10-formyltetrahydrofolate. In Bifidobacterium animalis subsp. lactis (strain AD011), this protein is Bifunctional protein FolD.